A 177-amino-acid chain; its full sequence is Large ribosomal subunit protein uL6 (177 aa).

It belongs to the universal ribosomal protein uL6 family. Part of the 50S ribosomal subunit.

This protein binds to the 23S rRNA, and is important in its secondary structure. It is located near the subunit interface in the base of the L7/L12 stalk, and near the tRNA binding site of the peptidyltransferase center. The chain is Large ribosomal subunit protein uL6 from Pseudomonas fluorescens (strain ATCC BAA-477 / NRRL B-23932 / Pf-5).